The primary structure comprises 424 residues: Adenylosuccinate synthetase 2 (424 aa).

GTP contacts are provided by residues 11-17 (GDEGKGK) and 39-41 (GHT). The active-site Proton acceptor is the Asp-12. Asp-12 and Gly-39 together coordinate Mg(2+). IMP is bound by residues 12–15 (DEGK), 37–40 (NAGH), Thr-127, Arg-141, Gln-223, Thr-238, and Arg-302. His-40 serves as the catalytic Proton donor. A substrate-binding site is contributed by 298–304 (TTTGRGR). GTP contacts are provided by residues Arg-304, 330 to 332 (KLD), and 412 to 414 (SVG).

This sequence belongs to the adenylosuccinate synthetase family. As to quaternary structure, homodimer. The cofactor is Mg(2+).

It localises to the cytoplasm. It carries out the reaction IMP + L-aspartate + GTP = N(6)-(1,2-dicarboxyethyl)-AMP + GDP + phosphate + 2 H(+). It functions in the pathway purine metabolism; AMP biosynthesis via de novo pathway; AMP from IMP: step 1/2. Its function is as follows. Plays an important role in the de novo pathway of purine nucleotide biosynthesis. Catalyzes the first committed step in the biosynthesis of AMP from IMP. In Methanosarcina acetivorans (strain ATCC 35395 / DSM 2834 / JCM 12185 / C2A), this protein is Adenylosuccinate synthetase 2.